The chain runs to 656 residues: Membrane-associated tyrosine- and threonine-specific cdc2-inhibitory kinase wee-1.3 (656 aa).

Positions 1-11 are enriched in polar residues; that stretch reads MDETENNTSID. The tract at residues 1 to 24 is disordered; the sequence is MDETENNTSIDSVEVGPSSPRVVA. Residues 107-354 form the Protein kinase domain; that stretch reads FQIDEIIGRG…SDALRKHLSI (248 aa). ATP contacts are provided by residues 113 to 121 and lysine 136; that span reads IGRGSFGEV. Aspartate 227 (proton acceptor) is an active-site residue. The Mg(2+) site is built by asparagine 232 and aspartate 245. Disordered stretches follow at residues 449-552 and 617-656; these read PFDF…NSSI and KGKE…GDEN. Over residues 486–505 the composition is skewed to polar residues; the sequence is ATCSSSNSSAIETAEDSLSS. Residues 617-631 are compositionally biased toward basic and acidic residues; the sequence is KGKEKPVVEPAELRQ. Over residues 646–656 the composition is skewed to polar residues; the sequence is ASFQGSSGDEN.

This sequence belongs to the protein kinase superfamily. Ser/Thr protein kinase family. WEE1 subfamily.

It localises to the golgi apparatus membrane. It is found in the cytoplasm. The catalysed reaction is L-seryl-[protein] + ATP = O-phospho-L-seryl-[protein] + ADP + H(+). It carries out the reaction L-threonyl-[protein] + ATP = O-phospho-L-threonyl-[protein] + ADP + H(+). Its function is as follows. Acts as a negative regulator of entry into mitosis (G2 to M transition) by phosphorylation of the CDK1 kinase during oocyte maturation. Required for embryonic development, germline proliferation and initiation of meiosis during spermatogenesis. Required for chromosome structure during mitosis and negative regulation of nuclear envelope breakdown. The chain is Membrane-associated tyrosine- and threonine-specific cdc2-inhibitory kinase wee-1.3 from Caenorhabditis briggsae.